The sequence spans 238 residues: Small ribosomal subunit protein uS2 (238 aa).

The protein belongs to the universal ribosomal protein uS2 family.

The sequence is that of Small ribosomal subunit protein uS2 from Prochlorococcus marinus (strain MIT 9211).